Reading from the N-terminus, the 289-residue chain is Protoheme IX farnesyltransferase 2 (289 aa).

Transmembrane regions (helical) follow at residues 4–24, 28–48, 66–86, 99–118, 124–144, 155–175, 199–219, 221–241, and 256–276; these read PGII…AAKG, LVLM…GCAI, RVTV…LALG, ALAL…VYSL, SVYG…VGYC, AILL…IAIF, LHIV…PLAG, TGIA…AMAL, and QVFG…ALDF.

Belongs to the UbiA prenyltransferase family. Protoheme IX farnesyltransferase subfamily.

It localises to the cell inner membrane. It carries out the reaction heme b + (2E,6E)-farnesyl diphosphate + H2O = Fe(II)-heme o + diphosphate. It participates in porphyrin-containing compound metabolism; heme O biosynthesis; heme O from protoheme: step 1/1. Functionally, converts heme B (protoheme IX) to heme O by substitution of the vinyl group on carbon 2 of heme B porphyrin ring with a hydroxyethyl farnesyl side group. This chain is Protoheme IX farnesyltransferase 2, found in Shewanella baltica (strain OS195).